Here is a 518-residue protein sequence, read N- to C-terminus: Glutamate--cysteine ligase (518 aa).

It belongs to the glutamate--cysteine ligase type 1 family. Type 1 subfamily.

It catalyses the reaction L-cysteine + L-glutamate + ATP = gamma-L-glutamyl-L-cysteine + ADP + phosphate + H(+). The protein operates within sulfur metabolism; glutathione biosynthesis; glutathione from L-cysteine and L-glutamate: step 1/2. The chain is Glutamate--cysteine ligase from Shigella sonnei (strain Ss046).